A 757-amino-acid chain; its full sequence is MDVNPTLLFLKVPVQNAISTTFPYTGDPPYSHGTGTGYTMDTVNRTHQYSEKGKWTTNTETGAPQLNPIDGPLPEDNEPSGYAQTDCVLEAMAFLEESHPGIFENSCLETMEIVQQTRVDKLTQGRQTYDWTLNRNQPAATALANTIEIFRSNGLTANESGRLIDFLKDVMESMDKEEMEITTHFQRKRRVRDNMTKKMVTQRTIGKKKQRLNKKSYLIRALTLNTMTKDAERGKLKRRAIATPGMQIRGFVYFVETLARSICEKLEQSGLPVGGNEKKAKLANVVRKMMTNSQDTELSFTITGDNTKWNENQNPRMFLAMITYITRNQPEWFRNVLSIAPIMFSNKMARLGKGYMFESKSMKLRTQIPAEMLANIDLKYFNELTKKKIDKIRPLLIDGTASLSPGMMMGMFNMLSTVLGVSILNLGQKRCTKTTYWWDGLQSSDDFALIVNAPNHEGIQAGVDRFYRTCKLVGINMSKKKSYINRTGTFEFTSFFYRYGFVANFSMELPSFGVSGINESADMSIGVTVIKNNMINNDLGPATAQMALQLFIKDYRYTYRCHRGDTQIQTRRSFELKKLWEQTRSKAGLLVSDGGPNLYNIRNLHIPEVCLKWELMDEDYQGRLCNPLNPFVSHKEIESVNNAVVMPAHGPAKSMEYDAVATTHSWIPKRNRSILNTSQRGILEDEQMYQKCCNLFEKFFPSSSYRRPVGISSMVEAMVSRARIDARIDFESGRIKKEEFAEIMKICSTIEELRRQK.

The disordered stretch occupies residues Lys52–Tyr82. Positions Trp55–Pro64 are enriched in polar residues. 2 short sequence motifs (nuclear localization signal) span residues Arg187 to Met195 and Arg203 to Ser216. The interval Arg249–Glu256 is promoter-binding site. Positions Val286–Tyr483 constitute a RdRp catalytic domain.

The protein belongs to the influenza viruses polymerase PB1 family. Influenza RNA polymerase is composed of three subunits: PB1, PB2 and PA. Interacts (via N-terminus) with PA (via C-terminus). Interacts (via C-terminus) with PB2 (via N-terminus); this interaction is essential for transcription initiation. Phosphorylated by host PRKCA.

Its subcellular location is the host nucleus. The protein resides in the host cytoplasm. It catalyses the reaction RNA(n) + a ribonucleoside 5'-triphosphate = RNA(n+1) + diphosphate. Its function is as follows. RNA-dependent RNA polymerase which is responsible for replication and transcription of virus RNA segments. The transcription of viral mRNAs occurs by a unique mechanism called cap-snatching. 5' methylated caps of cellular mRNAs are cleaved after 10-13 nucleotides by PA. In turn, these short capped RNAs are used as primers by PB1 for transcription of viral mRNAs. During virus replication, PB1 initiates RNA synthesis and copy vRNA into complementary RNA (cRNA) which in turn serves as a template for the production of more vRNAs. This is RNA-directed RNA polymerase catalytic subunit from Aves (Cat).